Here is a 343-residue protein sequence, read N- to C-terminus: NADH-cytochrome b5 reductase 2 (343 aa).

The chain crosses the membrane as a helical span at residues Ile-41–Ala-61. In terms of domain architecture, FAD-binding FR-type spans Gln-92–Glu-197. Lys-200–Leu-235 provides a ligand contact to FAD.

The protein belongs to the flavoprotein pyridine nucleotide cytochrome reductase family. Requires FAD as cofactor.

Its subcellular location is the mitochondrion outer membrane. It catalyses the reaction 2 Fe(III)-[cytochrome b5] + NADH = 2 Fe(II)-[cytochrome b5] + NAD(+) + H(+). May mediate the reduction of outer membrane cytochrome b5. This Neurospora crassa (strain ATCC 24698 / 74-OR23-1A / CBS 708.71 / DSM 1257 / FGSC 987) protein is NADH-cytochrome b5 reductase 2 (mcr-1).